The following is a 588-amino-acid chain: L-fucose isomerase (588 aa).

Residues Glu335 and Asp359 each act as proton acceptor in the active site. 3 residues coordinate Mn(2+): Glu335, Asp359, and His525.

This sequence belongs to the L-fucose isomerase family. Mn(2+) is required as a cofactor.

The protein resides in the cytoplasm. The catalysed reaction is L-fucose = L-fuculose. It functions in the pathway carbohydrate degradation; L-fucose degradation; L-lactaldehyde and glycerone phosphate from L-fucose: step 1/3. In terms of biological role, converts the aldose L-fucose into the corresponding ketose L-fuculose. In Streptococcus pneumoniae (strain Hungary19A-6), this protein is L-fucose isomerase.